The chain runs to 137 residues: Thioredoxin-like protein R548 (137 aa).

The Thioredoxin domain maps to 2–137 (SKDSVETNTI…LEKSIVESSQ (136 aa)). Residues cysteine 61 and cysteine 64 each act as nucleophile in the active site. Cysteine 61 and cysteine 64 form a disulfide bridge.

The protein belongs to the thioredoxin family.

In terms of biological role, participates in various redox reactions through the reversible oxidation of its active center dithiol to a disulfide and catalyzes dithiol-disulfide exchange reactions. The protein is Thioredoxin-like protein R548 of Acanthamoeba polyphaga mimivirus (APMV).